Here is a 353-residue protein sequence, read N- to C-terminus: Polyprenal reductase 2 (353 aa).

The next 6 helical transmembrane spans lie at 11 to 31 (PLLCFAWIAATLPIIAAALPI), 78 to 98 (FMHFYVVGVLATTILLLAIWF), 175 to 195 (MHIVGYLTGLFYYVAAPLSLA), 234 to 254 (PLLKLGWTQWIGAVIFIWGSL), 291 to 308 (YLAELVIYFGMLVASGAE), and 313 to 335 (WFLFIFVITNLSFAAVETYNWYL).

It belongs to the steroid 5-alpha reductase family. Polyprenal reductase subfamily.

The protein localises to the cell membrane. It carries out the reaction a di-trans,poly-cis-dolichal + NADP(+) = a di-trans,poly-cis-polyprenal + NADPH + H(+). It participates in protein modification; protein glycosylation. In terms of biological role, plays a key role in early steps of protein N-linked glycosylation by being involved in the conversion of polyprenol into dolichol. Acts as a polyprenal reductase that mediates the reduction of polyprenal into dolichal in a NADP-dependent mechanism. Dolichols are required for the synthesis of dolichol-linked monosaccharides and the oligosaccharide precursor used for N-glycosylation. The protein is Polyprenal reductase 2 of Oryza sativa subsp. japonica (Rice).